A 237-amino-acid chain; its full sequence is UPF0053 inner membrane protein YgdQ (237 aa).

Topologically, residues 1-17 (MLFAWITDPNAWLALGT) are periplasmic. A helical transmembrane segment spans residues 18-38 (LTLLEIVLGIDNIIFLSLVVA). Topologically, residues 39 to 50 (KLPTAQRAHARR) are cytoplasmic. A helical membrane pass occupies residues 51 to 71 (LGLAGAMVMRLALLASIAWVT). Residues 72 to 79 (RLTNPLFT) are Periplasmic-facing. The helical transmembrane segment at 80 to 100 (IFSQEISARDLILLLGGLFLI) threads the bilayer. At 101–124 (WKASKEIHESIEGEEEGLKTRVSS) the chain is on the cytoplasmic side. A helical transmembrane segment spans residues 125 to 145 (FLGAIVQIMLLDIIFSLDSVI). The Periplasmic segment spans residues 146-151 (TAVGLS). Residues 152–172 (DHLFIMMAAVVIAVGVMMFAA) traverse the membrane as a helical segment. Residues 173-186 (RSIGDFVERHPSVK) lie on the Cytoplasmic side of the membrane. Residues 187–207 (MLALSFLILVGFTLILESFDI) form a helical membrane-spanning segment. The Periplasmic segment spans residues 208–209 (HV). Residues 210-230 (PKGYIYFAMFFSIAVESLNLI) form a helical membrane-spanning segment. Residues 231-237 (RNKKNPL) lie on the Cytoplasmic side of the membrane.

Belongs to the UPF0053 family.

It is found in the cell inner membrane. This chain is UPF0053 inner membrane protein YgdQ (ygdQ), found in Escherichia coli O157:H7.